The primary structure comprises 514 residues: Contact site A protein (514 aa).

An N-terminal signal peptide occupies residues 1-19; sequence MKFLLVLIILYNILNSAHS. Residues 20–453 are globular; the sequence is APTITAVSNG…EATTSTTYTI (434 aa). One can recognise an IPT/TIG 1 domain in the interval 21 to 104; that stretch reads PTITAVSNGK…TGGNGLFKYT (84 aa). N-linked (GlcNAc...) asparagine glycosylation is found at Asn-128, Asn-137, Asn-207, Asn-294, and Asn-399. The IPT/TIG 2 domain occupies 191–283; the sequence is PTITSITPLA…NQQPITFTYN (93 aa). Low complexity-rich tracts occupy residues 446-475 and 483-494; these read TTSTTYTIPDTPTPTDTATPSPTPTETATP and STPEETEAPSSA. The segment at 446-494 is disordered; it reads TTSTTYTIPDTPTPTDTATPSPTPTETATPSPTPKPTSTPEETEAPSSA. Repeat copies occupy residues 462 to 469 and 472 to 479. The segment at 462–479 is 2 X 8 AA repeats, Pro-rich; that stretch reads TATPSPTPTETATPSPTP. The GPI-like-anchor amidated serine moiety is linked to residue Ser-492. A propeptide spans 493–514 (removed in mature form); sequence SATTLISPLSLIVIFISFVLLI.

In terms of processing, phosphorylated on serine and N-glycosylated with two types of oligosaccharide chains. Post-translationally, the GPI-like-anchor contains a phosphoceramide group, rather than a phosphatidyl group.

The protein localises to the cell membrane. Its function is as follows. This cell-surface glycoprotein mediates cell-cell binding via homophilic interaction. The chain is Contact site A protein (csaA) from Dictyostelium discoideum (Social amoeba).